The primary structure comprises 614 residues: Allergen Ara h 1, clone P17 (614 aa).

Positions 1–25 (MRGRVSPLMLLLGILVLASVSATQA) are cleaved as a signal peptide. 4 disordered regions span residues 72-177 (DTGA…RRFS), 334-356 (NAGG…DNEG), 372-397 (HAKS…DGEP), and 464-491 (KEQQ…SNRE). Residues 81–132 (PPGERTRGRQPGDYDDDRRQPRREEGGRWGPAEPREREREEDWRQPREDWRR) are compositionally biased toward basic and acidic residues. A Cupin type-1 1 domain is found at 169-327 (FYFPSRRFST…AFNAEFNEIR (159 aa)). The 177-residue stretch at 390-566 (INLRDGEPDL…AFPGSGEQVE (177 aa)) folds into the Cupin type-1 2 domain. Positions 464–474 (KEQQQRGRREQ) are enriched in basic and acidic residues. The span at 475–486 (EWEEEEEDEEEE) shows a compositional bias: acidic residues. Residue N516 is glycosylated (N-linked (GlcNAc...) asparagine). Residues 572–614 (QRESHFVSARPQSQSPSSPEKEDQEEENQGGKGPLLSILKAFN) are disordered.

The protein belongs to the 7S seed storage protein family.

This chain is Allergen Ara h 1, clone P17, found in Arachis hypogaea (Peanut).